A 111-amino-acid chain; its full sequence is Nucleoid-associated protein Tmel_0542 (111 aa).

The protein belongs to the YbaB/EbfC family. As to quaternary structure, homodimer.

It is found in the cytoplasm. The protein localises to the nucleoid. Functionally, binds to DNA and alters its conformation. May be involved in regulation of gene expression, nucleoid organization and DNA protection. In Thermosipho melanesiensis (strain DSM 12029 / CIP 104789 / BI429), this protein is Nucleoid-associated protein Tmel_0542.